The sequence spans 268 residues: NADH-quinone oxidoreductase subunit B 2 (268 aa).

The [4Fe-4S] cluster site is built by Cys42, Cys43, Cys108, and Cys138. The disordered stretch occupies residues 237–268 (SPNKAKGVAPEIRHNDLKRPAVEVDHARDEQR). Basic and acidic residues predominate over residues 247–268 (EIRHNDLKRPAVEVDHARDEQR).

The protein belongs to the complex I 20 kDa subunit family. In terms of assembly, NDH-1 is composed of 14 different subunits. Subunits NuoB, C, D, E, F, and G constitute the peripheral sector of the complex. It depends on [4Fe-4S] cluster as a cofactor.

It is found in the cell membrane. It catalyses the reaction a quinone + NADH + 5 H(+)(in) = a quinol + NAD(+) + 4 H(+)(out). Its function is as follows. NDH-1 shuttles electrons from NADH, via FMN and iron-sulfur (Fe-S) centers, to quinones in the respiratory chain. The immediate electron acceptor for the enzyme in this species is believed to be ubiquinone. Couples the redox reaction to proton translocation (for every two electrons transferred, four hydrogen ions are translocated across the cytoplasmic membrane), and thus conserves the redox energy in a proton gradient. The polypeptide is NADH-quinone oxidoreductase subunit B 2 (Roseiflexus castenholzii (strain DSM 13941 / HLO8)).